Here is a 635-residue protein sequence, read N- to C-terminus: Threonine--tRNA ligase (635 aa).

Positions 1-61 constitute a TGS domain; it reads MIAITLPDGS…DRDAELAIVT (61 aa). The segment at 242 to 533 is catalytic; the sequence is DHRKLGKTLD…LLENHAGALP (292 aa). Zn(2+) is bound by residues Cys-333, His-384, and His-510.

The protein belongs to the class-II aminoacyl-tRNA synthetase family. In terms of assembly, homodimer. It depends on Zn(2+) as a cofactor.

It is found in the cytoplasm. It catalyses the reaction tRNA(Thr) + L-threonine + ATP = L-threonyl-tRNA(Thr) + AMP + diphosphate + H(+). Functionally, catalyzes the attachment of threonine to tRNA(Thr) in a two-step reaction: L-threonine is first activated by ATP to form Thr-AMP and then transferred to the acceptor end of tRNA(Thr). Also edits incorrectly charged L-seryl-tRNA(Thr). The polypeptide is Threonine--tRNA ligase (Cupriavidus necator (strain ATCC 17699 / DSM 428 / KCTC 22496 / NCIMB 10442 / H16 / Stanier 337) (Ralstonia eutropha)).